The sequence spans 311 residues: tRNA-cytidine(32) 2-sulfurtransferase (311 aa).

A PP-loop motif motif is present at residues 47–52; sequence SGGKDS. Positions 122, 125, and 213 each coordinate [4Fe-4S] cluster.

The protein belongs to the TtcA family. As to quaternary structure, homodimer. Mg(2+) is required as a cofactor. [4Fe-4S] cluster serves as cofactor.

It localises to the cytoplasm. It catalyses the reaction cytidine(32) in tRNA + S-sulfanyl-L-cysteinyl-[cysteine desulfurase] + AH2 + ATP = 2-thiocytidine(32) in tRNA + L-cysteinyl-[cysteine desulfurase] + A + AMP + diphosphate + H(+). Its pathway is tRNA modification. Functionally, catalyzes the ATP-dependent 2-thiolation of cytidine in position 32 of tRNA, to form 2-thiocytidine (s(2)C32). The sulfur atoms are provided by the cysteine/cysteine desulfurase (IscS) system. The sequence is that of tRNA-cytidine(32) 2-sulfurtransferase from Pectobacterium atrosepticum (strain SCRI 1043 / ATCC BAA-672) (Erwinia carotovora subsp. atroseptica).